The chain runs to 81 residues: Protein L83L (81 aa).

A disordered region spans residues 1 to 28; it reads MDTSLKNNDGALDADNKNYQDYKDEPDK. A compositionally biased stretch (basic and acidic residues) spans 14–28; sequence ADNKNYQDYKDEPDK.

This sequence belongs to the asfivirus L83L family. In terms of assembly, interacts with host IL1B.

It localises to the host cytoplasm. Its function is as follows. May subvert the host innate immune response by interacting with host IL1B and interfering with its function. This chain is Protein L83L, found in African swine fever virus (isolate Tick/South Africa/Pretoriuskop Pr4/1996) (ASFV).